Here is a 354-residue protein sequence, read N- to C-terminus: Uroporphyrinogen decarboxylase (354 aa).

Substrate-binding positions include 27-31 (RQAGR), D77, Y154, T209, and H327.

This sequence belongs to the uroporphyrinogen decarboxylase family. Homodimer.

It localises to the cytoplasm. It carries out the reaction uroporphyrinogen III + 4 H(+) = coproporphyrinogen III + 4 CO2. It participates in porphyrin-containing compound metabolism; protoporphyrin-IX biosynthesis; coproporphyrinogen-III from 5-aminolevulinate: step 4/4. In terms of biological role, catalyzes the decarboxylation of four acetate groups of uroporphyrinogen-III to yield coproporphyrinogen-III. This chain is Uroporphyrinogen decarboxylase, found in Pseudomonas entomophila (strain L48).